Consider the following 187-residue polypeptide: Ribosome-recycling factor (187 aa).

The protein belongs to the RRF family.

It is found in the cytoplasm. Functionally, responsible for the release of ribosomes from messenger RNA at the termination of protein biosynthesis. May increase the efficiency of translation by recycling ribosomes from one round of translation to another. The sequence is that of Ribosome-recycling factor from Parvibaculum lavamentivorans (strain DS-1 / DSM 13023 / NCIMB 13966).